Here is a 382-residue protein sequence, read N- to C-terminus: ATP phosphoribosyltransferase regulatory subunit (382 aa).

Belongs to the class-II aminoacyl-tRNA synthetase family. HisZ subfamily. Heteromultimer composed of HisG and HisZ subunits.

Its subcellular location is the cytoplasm. The protein operates within amino-acid biosynthesis; L-histidine biosynthesis; L-histidine from 5-phospho-alpha-D-ribose 1-diphosphate: step 1/9. Its function is as follows. Required for the first step of histidine biosynthesis. May allow the feedback regulation of ATP phosphoribosyltransferase activity by histidine. The protein is ATP phosphoribosyltransferase regulatory subunit of Acidovorax ebreus (strain TPSY) (Diaphorobacter sp. (strain TPSY)).